Consider the following 291-residue polypeptide: ATP synthase gamma chain (291 aa).

This sequence belongs to the ATPase gamma chain family. In terms of assembly, F-type ATPases have 2 components, CF(1) - the catalytic core - and CF(0) - the membrane proton channel. CF(1) has five subunits: alpha(3), beta(3), gamma(1), delta(1), epsilon(1). CF(0) has three main subunits: a, b and c.

The protein resides in the cell inner membrane. Produces ATP from ADP in the presence of a proton gradient across the membrane. The gamma chain is believed to be important in regulating ATPase activity and the flow of protons through the CF(0) complex. This is ATP synthase gamma chain from Cupriavidus pinatubonensis (strain JMP 134 / LMG 1197) (Cupriavidus necator (strain JMP 134)).